A 330-amino-acid polypeptide reads, in one-letter code: Putative [LysW]-L-2-aminoadipate/[LysW]-L-glutamate phosphate reductase (330 aa).

An NADP(+)-binding site is contributed by 10 to 13; that stretch reads SGYI. The active site involves Cys142. An NADP(+)-binding site is contributed by Asn297.

This sequence belongs to the NAGSA dehydrogenase family. Type 1 subfamily. LysY sub-subfamily.

The protein resides in the cytoplasm. The catalysed reaction is [amino-group carrier protein]-C-terminal-N-(1-carboxy-5-oxopentan-1-yl)-L-glutamine + phosphate + NADP(+) = [amino-group carrier protein]-C-terminal-N-(1-carboxy-5-phosphooxy-5-oxopentan-1-yl)-L-glutamine + NADPH + H(+). It carries out the reaction [amino-group carrier protein]-C-terminal-gamma-(L-glutamyl-5-semialdehyde)-L-glutamate + phosphate + NADP(+) = [amino-group carrier protein]-C-terminal-gamma-(5-phospho-L-glutamyl)-L-glutamate + NADPH + H(+). The protein operates within amino-acid biosynthesis; L-lysine biosynthesis via AAA pathway; L-lysine from L-alpha-aminoadipate (Thermus route): step 3/5. It participates in amino-acid biosynthesis; L-arginine biosynthesis. Its function is as follows. Involved in both the arginine and lysine biosynthetic pathways. This Pyrococcus horikoshii (strain ATCC 700860 / DSM 12428 / JCM 9974 / NBRC 100139 / OT-3) protein is Putative [LysW]-L-2-aminoadipate/[LysW]-L-glutamate phosphate reductase.